Here is a 518-residue protein sequence, read N- to C-terminus: WEB family protein At2g40480 (518 aa).

Coiled-coil stretches lie at residues 95–141 (DIKR…LQQE) and 188–219 (DNLV…AKLT). A disordered region spans residues 303–337 (NGESQDDDSEFCFPEPPRSPVTPRGLRIDNDFSTD). The segment covering 328 to 337 (LRIDNDFSTD) has biased composition (basic and acidic residues). Residues 344 to 375 (ILKKLEEATEGVKQSKQALEAALNRVEIANVK) adopt a coiled-coil conformation.

The protein belongs to the WEB family.

In Arabidopsis thaliana (Mouse-ear cress), this protein is WEB family protein At2g40480.